A 151-amino-acid polypeptide reads, in one-letter code: Large ribosomal subunit protein uL13 (151 aa).

It belongs to the universal ribosomal protein uL13 family. In terms of assembly, part of the 50S ribosomal subunit.

Its function is as follows. This protein is one of the early assembly proteins of the 50S ribosomal subunit, although it is not seen to bind rRNA by itself. It is important during the early stages of 50S assembly. The protein is Large ribosomal subunit protein uL13 of Synechococcus sp. (strain JA-2-3B'a(2-13)) (Cyanobacteria bacterium Yellowstone B-Prime).